The sequence spans 350 residues: Biotin synthase (350 aa).

Positions 38–262 (RQVQVSTLLS…MMPTSYVRLS (225 aa)) constitute a Radical SAM core domain. Residues C53, C57, and C60 each contribute to the [4Fe-4S] cluster site. Residues C97, C128, C188, and R260 each contribute to the [2Fe-2S] cluster site.

This sequence belongs to the radical SAM superfamily. Biotin synthase family. As to quaternary structure, homodimer. It depends on [4Fe-4S] cluster as a cofactor. [2Fe-2S] cluster serves as cofactor.

It catalyses the reaction (4R,5S)-dethiobiotin + (sulfur carrier)-SH + 2 reduced [2Fe-2S]-[ferredoxin] + 2 S-adenosyl-L-methionine = (sulfur carrier)-H + biotin + 2 5'-deoxyadenosine + 2 L-methionine + 2 oxidized [2Fe-2S]-[ferredoxin]. The protein operates within cofactor biosynthesis; biotin biosynthesis; biotin from 7,8-diaminononanoate: step 2/2. Catalyzes the conversion of dethiobiotin (DTB) to biotin by the insertion of a sulfur atom into dethiobiotin via a radical-based mechanism. The chain is Biotin synthase from Yersinia enterocolitica serotype O:8 / biotype 1B (strain NCTC 13174 / 8081).